The chain runs to 150 residues: Large ribosomal subunit protein uL16 (150 aa).

The protein belongs to the universal ribosomal protein uL16 family. Component of the small ribosomal subunit. Mature ribosomes consist of a small (40S) and a large (60S) subunit. The 40S subunit contains about 33 different proteins and 1 molecule of RNA (18S). The 60S subunit contains about 49 different proteins and 3 molecules of RNA (25S, 5.8S and 5S).

This is Large ribosomal subunit protein uL16 (RPL10) from Nicotiana tabacum (Common tobacco).